Consider the following 450-residue polypeptide: MLPTIALIGRPNVGKSTLFNRLLRKKRAITHDMPGITRDRIYAEGNYNGVHYALIDTGGLVMESDNNSEEFQGDIFEQAREAIEEAQALILVVDGRTGITQLDEQVAAYIRQSNKPILLLVNKVDGSELEATATADFHALGFEMMAVSAEHGFNLLELREKVADMALATGIEYEEEDEEAKGLKIAMLGRPNAGKSSMVNALTGEERVIVSDVAGTTRDSVDVTFESGGKIYTFVDTAGVRRRTNITDTIERFSVVRALRSSTKADITVMVVDALAGITKQDKRLLEYLLREAVPFIIAVNKIDLVSKSERNLLREGFERALRMAHHVPVVYTSCISKSGLGGILPLASKLKAECSLRISTGQLNRIMKEIIEKHQPPVVKRRRAKFKYMTQADDEPPTFIFFINDEKLIKSSYHRFLENRLRKILNVKHAPLNIVFRSTFRAKEDIVHK.

2 consecutive EngA-type G domains span residues 3–170 (PTIA…LATG) and 183–356 (LKIA…AECS). GTP contacts are provided by residues 9-16 (GRPNVGKS), 56-60 (DTGGL), 122-125 (NKVD), 189-196 (GRPNAGKS), 236-240 (DTAGV), and 301-304 (NKID). A KH-like domain is found at 357–441 (LRISTGQLNR…PLNIVFRSTF (85 aa)).

The protein belongs to the TRAFAC class TrmE-Era-EngA-EngB-Septin-like GTPase superfamily. EngA (Der) GTPase family. In terms of assembly, associates with the 50S ribosomal subunit.

Functionally, GTPase that plays an essential role in the late steps of ribosome biogenesis. This chain is GTPase Der, found in Maridesulfovibrio salexigens (strain ATCC 14822 / DSM 2638 / NCIMB 8403 / VKM B-1763) (Desulfovibrio salexigens).